Consider the following 234-residue polypeptide: Ubiquitin thioesterase OTUB2 (234 aa).

The OTU domain maps to 40–231 (TSIRKTKGDG…TSHYNILYAA (192 aa)). Aspartate 48 is an active-site residue. Cysteine 51 acts as the Nucleophile in catalysis. Active-site residues include histidine 205 and histidine 224.

This sequence belongs to the peptidase C65 family.

It catalyses the reaction Thiol-dependent hydrolysis of ester, thioester, amide, peptide and isopeptide bonds formed by the C-terminal Gly of ubiquitin (a 76-residue protein attached to proteins as an intracellular targeting signal).. Its function is as follows. Hydrolase that can remove conjugated ubiquitin from proteins in vitro and may therefore play an important regulatory role at the level of protein turnover by preventing degradation. Mediates deubiquitination of 'Lys-11'-,'Lys-48'- and 'Lys-63'-linked polyubiquitin chains, with a preference for 'Lys-63'-linked polyubiquitin chains. The polypeptide is Ubiquitin thioesterase OTUB2 (Otub2) (Mus musculus (Mouse)).